A 759-amino-acid chain; its full sequence is Phosphoribosylformylglycinamidine synthase subunit PurL (759 aa).

The active site involves H61. Residues Y64 and K105 each coordinate ATP. Residue E107 coordinates Mg(2+). Residues 108–111 and R130 each bind substrate; that span reads SHNH. H109 functions as the Proton acceptor in the catalytic mechanism. D131 contacts Mg(2+). Position 260 (Q260) interacts with substrate. D288 contacts Mg(2+). 332–334 contributes to the substrate binding site; the sequence is ESQ. ATP contacts are provided by D520 and G557. Residue N558 participates in Mg(2+) binding. S560 serves as a coordination point for substrate.

This sequence belongs to the FGAMS family. Monomer. Part of the FGAM synthase complex composed of 1 PurL, 1 PurQ and 2 PurS subunits.

It is found in the cytoplasm. It catalyses the reaction N(2)-formyl-N(1)-(5-phospho-beta-D-ribosyl)glycinamide + L-glutamine + ATP + H2O = 2-formamido-N(1)-(5-O-phospho-beta-D-ribosyl)acetamidine + L-glutamate + ADP + phosphate + H(+). The protein operates within purine metabolism; IMP biosynthesis via de novo pathway; 5-amino-1-(5-phospho-D-ribosyl)imidazole from N(2)-formyl-N(1)-(5-phospho-D-ribosyl)glycinamide: step 1/2. Its function is as follows. Part of the phosphoribosylformylglycinamidine synthase complex involved in the purines biosynthetic pathway. Catalyzes the ATP-dependent conversion of formylglycinamide ribonucleotide (FGAR) and glutamine to yield formylglycinamidine ribonucleotide (FGAM) and glutamate. The FGAM synthase complex is composed of three subunits. PurQ produces an ammonia molecule by converting glutamine to glutamate. PurL transfers the ammonia molecule to FGAR to form FGAM in an ATP-dependent manner. PurS interacts with PurQ and PurL and is thought to assist in the transfer of the ammonia molecule from PurQ to PurL. The polypeptide is Phosphoribosylformylglycinamidine synthase subunit PurL (Thermoplasma acidophilum (strain ATCC 25905 / DSM 1728 / JCM 9062 / NBRC 15155 / AMRC-C165)).